Reading from the N-terminus, the 201-residue chain is Molybdenum cofactor guanylyltransferase (201 aa).

Residues 14-16 (LAG), K31, and D104 contribute to the GTP site. D104 is a Mg(2+) binding site.

It belongs to the MobA family. As to quaternary structure, monomer. Mg(2+) is required as a cofactor.

Its subcellular location is the cytoplasm. It catalyses the reaction Mo-molybdopterin + GTP + H(+) = Mo-molybdopterin guanine dinucleotide + diphosphate. In terms of biological role, transfers a GMP moiety from GTP to Mo-molybdopterin (Mo-MPT) cofactor (Moco or molybdenum cofactor) to form Mo-molybdopterin guanine dinucleotide (Mo-MGD) cofactor. The sequence is that of Molybdenum cofactor guanylyltransferase from Helicobacter pylori (strain P12).